Reading from the N-terminus, the 449-residue chain is NADP-specific glutamate dehydrogenase (449 aa).

Lys-125 is an active-site residue.

Belongs to the Glu/Leu/Phe/Val dehydrogenases family. Homohexamer.

It catalyses the reaction L-glutamate + NADP(+) + H2O = 2-oxoglutarate + NH4(+) + NADPH + H(+). This Giardia intestinalis (Giardia lamblia) protein is NADP-specific glutamate dehydrogenase.